Here is a 267-residue protein sequence, read N- to C-terminus: Large ribosomal subunit protein uL3 (267 aa).

Positions 124–147 (NQHIGPKSHGGGGGSQPVRQTGSL) are disordered.

It belongs to the universal ribosomal protein uL3 family. As to quaternary structure, part of the 50S ribosomal subunit. Forms a cluster with proteins L14 and L19.

In terms of biological role, one of the primary rRNA binding proteins, it binds directly near the 3'-end of the 23S rRNA, where it nucleates assembly of the 50S subunit. The chain is Large ribosomal subunit protein uL3 from Mycoplasmopsis agalactiae (strain NCTC 10123 / CIP 59.7 / PG2) (Mycoplasma agalactiae).